Consider the following 299-residue polypeptide: Ribonuclease H2 subunit A (299 aa).

Methionine 1 carries the post-translational modification N-acetylmethionine. An RNase H type-2 domain is found at 28–251 (PCVLGVDEAG…AQSILESEAE (224 aa)). Positions 34, 35, and 142 each coordinate a divalent metal cation. A phosphothreonine mark is found at threonine 205 and threonine 217. Residues 250 to 272 (AEDVKWEDSETGDPKGPGKIKSY) are disordered. Phosphoserine is present on serine 258.

Belongs to the RNase HII family. Eukaryotic subfamily. As to quaternary structure, the RNase H2 complex is a heterotrimer composed of the catalytic subunit RNASEH2A and the non-catalytic subunits RNASEH2B and RNASEH2C. It depends on Mn(2+) as a cofactor. Requires Mg(2+) as cofactor.

Its subcellular location is the nucleus. It carries out the reaction Endonucleolytic cleavage to 5'-phosphomonoester.. In terms of biological role, catalytic subunit of RNase HII, an endonuclease that specifically degrades the RNA of RNA:DNA hybrids. Participates in DNA replication, possibly by mediating the removal of lagging-strand Okazaki fragment RNA primers during DNA replication. Mediates the excision of single ribonucleotides from DNA:RNA duplexes. The protein is Ribonuclease H2 subunit A (RNASEH2A) of Bos taurus (Bovine).